A 765-amino-acid polypeptide reads, in one-letter code: MKTPWKVLLGLLAIAALVTVITVPVVLLTKGNDASTDSRRTYTLADYLKNTFRMKFYNLRWVSDHEYLYKQENNILLFNAEYGNSSIFLENSTFDEFGHSINDYSVSPDRQYILFEYNYVKQWRHSYTASYDIYDLNKRQLITEERIPNNTQWITWSSVGHKLAYVWNNDIYVKNEPNSPSQRITWTGKKDVIYNGITDWVYEEEVFSAYSALWWSPNSTFLAYAQFNDTEVPLIEYSFYSDESLQYPKTVKIPYPKAGAVNPTIKFFVVNISSLSPNINATSQQIVPPGSVLIGDHYLCDVTWVTEERISLQWLRRIQNYSIMDICDYDRSTGRWISSVGRQHIEISTTGWVGRFRPAEPHFTSDGNSFYKIISNEEGYKHICHFQTDKRNCTFITKGAWEVIGIEALTSDYLYYISNEYKGMPGARNLYKIQLNDYTKVTCLSCELNPDRCQYYSVSFSQEAKYYQLRCSGPGLPLYTLHNSNNDKELRVLENNSDLDQVLQDVQMPSKKLDFIHLHGTKFWYQMILPPHFDKSKKYPLLLEVYAGPCSQKADAIFRLNWATYLASTENIIVASFDGRGSGYQGDKIMHAINRRLGTFEVEDQIEATRQFSKMGFVDDKRIAIWGWSYGGYVTSMVLGAGSGVFKCGIAVAPVSKWEYYDSVYTERYMGLPTPEDNLDSYRNSTVMSRAENFKQVEYLLIHGTADDNVHFQQSAQISKALVDAGVDFQSMWYTDEDHGIASSTAHQHIYTHMSHFLKQCFSLL.

Over 1–6 the chain is Cytoplasmic; that stretch reads MKTPWK. A helical; Signal-anchor for type II membrane protein transmembrane segment spans residues 7 to 29; it reads VLLGLLAIAALVTVITVPVVLLT. The Extracellular segment spans residues 30–765; it reads KGNDASTDSR…HFLKQCFSLL (736 aa). Residues Asn84, Asn91, Asn149, Asn218, Asn228, Asn271, Asn280, Asn320, and Asn392 are each glycosylated (N-linked (GlcNAc...) asparagine). Cystine bridges form between Cys384–Cys393, Cys443–Cys446, and Cys453–Cys471. Residue Asn495 is glycosylated (N-linked (GlcNAc...) asparagine). Ser629 acts as the Charge relay system in catalysis. Cys648 and Cys761 are oxidised to a cystine. An N-linked (GlcNAc...) asparagine glycan is attached at Asn684. Catalysis depends on charge relay system residues Asp707 and His739.

The protein belongs to the peptidase S9B family. DPPIV subfamily. As to quaternary structure, monomer. Homodimer. Heterodimer with Seprase (FAP). Requires homodimerization for optimal dipeptidyl peptidase activity and T-cell costimulation. Found in a membrane raft complex, at least composed of BCL10, CARD11, DPP4 and IKBKB. Associates with collagen. Interacts with PTPRC; the interaction is enhanced in an interleukin-12-dependent manner in activated lymphocytes. Interacts (via extracellular domain) with ADA; does not inhibit its dipeptidyl peptidase activity. Interacts with CAV1 (via the N-terminus); the interaction is direct. Interacts (via cytoplasmic tail) with CARD11 (via PDZ domain); its homodimerization is necessary for interaction with CARD11. Interacts with IGF2R; the interaction is direct. Interacts with GPC3. In terms of processing, the soluble form (Dipeptidyl peptidase 4 soluble form also named SDPP) derives from the membrane form (Dipeptidyl peptidase 4 membrane form also named MDPP) by proteolytic processing. N- and O-Glycosylated. Post-translationally, phosphorylated. Mannose 6-phosphate residues in the carbohydrate moiety are necessary for interaction with IGF2R in activated T-cells. Mannose 6-phosphorylation is induced during T-cell activation. As to expression, intestinal epithelium, dendritic cells and several immune system tissues.

The protein localises to the secreted. The protein resides in the cell membrane. It localises to the apical cell membrane. It is found in the cell projection. Its subcellular location is the invadopodium membrane. The protein localises to the lamellipodium membrane. The protein resides in the cell junction. It localises to the membrane raft. It carries out the reaction Release of an N-terminal dipeptide, Xaa-Yaa-|-Zaa-, from a polypeptide, preferentially when Yaa is Pro, provided Zaa is neither Pro nor hydroxyproline.. With respect to regulation, inhibited by GPC3 and diprotin A. Cell surface glycoprotein receptor involved in the costimulatory signal essential for T-cell receptor (TCR)-mediated T-cell activation. Acts as a positive regulator of T-cell coactivation, by binding at least ADA, CAV1, IGF2R, and PTPRC. Its binding to CAV1 and CARD11 induces T-cell proliferation and NF-kappa-B activation in a T-cell receptor/CD3-dependent manner. Its interaction with ADA also regulates lymphocyte-epithelial cell adhesion. In association with FAP is involved in the pericellular proteolysis of the extracellular matrix (ECM), the migration and invasion of endothelial cells into the ECM. May be involved in the promotion of lymphatic endothelial cells adhesion, migration and tube formation. When overexpressed, enhanced cell proliferation, a process inhibited by GPC3. Also acts as a serine exopeptidase with a dipeptidyl peptidase activity that regulates various physiological processes by cleaving peptides in the circulation, including many chemokines, mitogenic growth factors, neuropeptides and peptide hormones. Removes N-terminal dipeptides sequentially from polypeptides having unsubstituted N-termini provided that the penultimate residue is proline. The polypeptide is Dipeptidyl peptidase 4 (DPP4) (Bos taurus (Bovine)).